We begin with the raw amino-acid sequence, 165 residues long: Ubiquitin D (165 aa).

Ubiquitin-like domains follow at residues 6-81 and 90-163; these read SCLC…LKVV and LFLV…CYCI.

It belongs to the ubiquitin D family. As to quaternary structure, interacts directly with the 26S proteasome. Interacts with NUB1; this interaction facilitates the linking of UBD-conjugated target protein to the proteasome complex and accelerates its own degradation and that of its conjugates. Interacts (via ubiquitin-like 1 domain) with the spindle checkpoint protein MAD2L1 during mitosis. Present in aggresomes of proteasome inhibited cells. Interacts with HDAC6 under proteasome impairment conditions. Forms a thioester with UBA6 in cells stimulated with tumor necrosis factor-alpha (TNFa) and interferon-gamma (IFNg). Interacts with SQSTM1 and TP53/p53. Post-translationally, can be acetylated. Constitutively expressed in mature dendritic cells and B-cells. Mostly expressed in the reticuloendothelial system (e.g. thymus, spleen), the gastrointestinal system, kidney, lung and prostate gland.

It is found in the nucleus. The protein localises to the cytoplasm. In terms of biological role, ubiquitin-like protein modifier which can be covalently attached to target proteins and subsequently leads to their degradation by the 26S proteasome, in a NUB1-dependent manner. Conjugation to the target protein is activated by UBA6 via adenylation of its C-terminal glycine. Promotes the expression of the proteasome subunit beta type-9 (PSMB9/LMP2). Regulates TNF-alpha-induced and LPS-mediated activation of the central mediator of innate immunity NF-kappa-B by promoting TNF-alpha-mediated proteasomal degradation of ubiquitinated-I-kappa-B-alpha. Required for TNF-alpha-induced p65 nuclear translocation in renal tubular epithelial cells (RTECs). May be involved in dendritic cell (DC) maturation, the process by which immature dendritic cells differentiate into fully competent antigen-presenting cells that initiate T-cell responses. Mediates mitotic non-disjunction and chromosome instability, in long-term in vitro culture and cancers, by abbreviating mitotic phase and impairing the kinetochore localization of MAD2L1 during the prometaphase stage of the cell cycle. May be involved in the formation of aggresomes when proteasome is saturated or impaired. Mediates apoptosis in a caspase-dependent manner, especially in renal epithelium and tubular cells during renal diseases such as polycystic kidney disease and Human immunodeficiency virus (HIV)-associated nephropathy (HIVAN). This chain is Ubiquitin D (UBD), found in Homo sapiens (Human).